Consider the following 503-residue polypeptide: ATP synthase subunit alpha (503 aa).

Residue 170–177 (GDKQTGKT) coordinates ATP.

Belongs to the ATPase alpha/beta chains family. As to quaternary structure, F-type ATPases have 2 components, CF(1) - the catalytic core - and CF(0) - the membrane proton channel. CF(1) has five subunits: alpha(3), beta(3), gamma(1), delta(1), epsilon(1). CF(0) has three main subunits: a(1), b(2) and c(9-12). The alpha and beta chains form an alternating ring which encloses part of the gamma chain. CF(1) is attached to CF(0) by a central stalk formed by the gamma and epsilon chains, while a peripheral stalk is formed by the delta and b chains.

It is found in the cell inner membrane. It catalyses the reaction ATP + H2O + 4 H(+)(in) = ADP + phosphate + 5 H(+)(out). Produces ATP from ADP in the presence of a proton gradient across the membrane. The alpha chain is a regulatory subunit. This is ATP synthase subunit alpha from Helicobacter pylori (strain J99 / ATCC 700824) (Campylobacter pylori J99).